Reading from the N-terminus, the 94-residue chain is Integration host factor subunit beta (94 aa).

This sequence belongs to the bacterial histone-like protein family. In terms of assembly, heterodimer of an alpha and a beta chain.

This protein is one of the two subunits of integration host factor, a specific DNA-binding protein that functions in genetic recombination as well as in transcriptional and translational control. The protein is Integration host factor subunit beta of Dechloromonas aromatica (strain RCB).